Reading from the N-terminus, the 691-residue chain is DNA ligase (691 aa).

NAD(+)-binding positions include 41–45, 90–91, and Glu-130; these read DAEYD and SL. The active-site N6-AMP-lysine intermediate is Lys-132. NAD(+) contacts are provided by Arg-153, Glu-190, Lys-307, and Lys-331. Residues Cys-425, Cys-428, Cys-443, and Cys-449 each contribute to the Zn(2+) site. The region spanning 610-691 is the BRCT domain; that stretch reads APQGVLAGKT…MHTLLEGHAR (82 aa).

It belongs to the NAD-dependent DNA ligase family. LigA subfamily. Mg(2+) is required as a cofactor. Requires Mn(2+) as cofactor.

It catalyses the reaction NAD(+) + (deoxyribonucleotide)n-3'-hydroxyl + 5'-phospho-(deoxyribonucleotide)m = (deoxyribonucleotide)n+m + AMP + beta-nicotinamide D-nucleotide.. DNA ligase that catalyzes the formation of phosphodiester linkages between 5'-phosphoryl and 3'-hydroxyl groups in double-stranded DNA using NAD as a coenzyme and as the energy source for the reaction. It is essential for DNA replication and repair of damaged DNA. This Burkholderia pseudomallei (strain 668) protein is DNA ligase.